A 95-amino-acid polypeptide reads, in one-letter code: Sec-independent protein translocase protein TatA (95 aa).

The chain crosses the membrane as a helical span at residues 1–21 (MGSMSVWHWVIVAVVVMLLFG). A disordered region spans residues 42 to 95 (GMADDETQPNTATSVPPVGPNDPVRTLPHQGAPGTAPQPPHVQPHVSAGDHKAV).

This sequence belongs to the TatA/E family. In terms of assembly, the Tat system comprises two distinct complexes: a TatABC complex, containing multiple copies of TatA, TatB and TatC subunits, and a separate TatA complex, containing only TatA subunits. Substrates initially bind to the TatABC complex, which probably triggers association of the separate TatA complex to form the active translocon.

The protein resides in the cell inner membrane. In terms of biological role, part of the twin-arginine translocation (Tat) system that transports large folded proteins containing a characteristic twin-arginine motif in their signal peptide across membranes. TatA could form the protein-conducting channel of the Tat system. The chain is Sec-independent protein translocase protein TatA from Methylorubrum extorquens (strain CM4 / NCIMB 13688) (Methylobacterium extorquens).